Here is an 82-residue protein sequence, read N- to C-terminus: Small ribosomal subunit protein bS18 (82 aa).

This sequence belongs to the bacterial ribosomal protein bS18 family. As to quaternary structure, part of the 30S ribosomal subunit. Forms a tight heterodimer with protein bS6.

Functionally, binds as a heterodimer with protein bS6 to the central domain of the 16S rRNA, where it helps stabilize the platform of the 30S subunit. This Chlamydia caviae (strain ATCC VR-813 / DSM 19441 / 03DC25 / GPIC) (Chlamydophila caviae) protein is Small ribosomal subunit protein bS18.